A 123-amino-acid chain; its full sequence is Potassium voltage-gated channel subfamily E member 2 (123 aa).

N-linked (GlcNAc...) asparagine glycans are attached at residues N6 and N29. A helical transmembrane segment spans residues 49 to 69 (VILYLMVMIGMFSFIIVAILV). At 70–123 (STVKSKRREHSNDPYHQYIVEDWQEKYKSQILNLEESKATIHENIGAAGFKMSP) the chain is on the cytoplasmic side.

Belongs to the potassium channel KCNE family. In terms of assembly, interacts with KCNB1. Associates with KCNH2/ERG1. May associate with KCNQ2 and KCNQ3. Associates with HCN1 and probably HCN2. Heteromultimer with KCNC2. Interacts with KCNC2. Interacts with KCNQ1; forms a heterooligomer complex that targets to the membrane raft and leading to currents with an apparently instantaneous activation, a rapid deactivation process and a linear current-voltage relationship and decreases the amplitude of the outward current. Highly expressed in brain, heart, skeletal muscle, pancreas, placenta, kidney, colon and thymus. A small but significant expression is found in liver, ovary, testis, prostate, small intestine and leukocytes. Very low expression, nearly undetectable, in lung and spleen.

The protein localises to the cell membrane. Its subcellular location is the apical cell membrane. Functionally, ancillary protein that functions as a regulatory subunit of the voltage-gated potassium (Kv) channel complex composed of pore-forming and potassium-conducting alpha subunits and of regulatory beta subunits. KCNE2 beta subunit modulates the gating kinetics and enhances stability of the channel complex. Alters the gating of the delayed rectifier Kv channel containing KCNB1 alpha subunit. Associates with KCNH2/HERG alpha subunit Kv channel to form the rapidly activating component of the delayed rectifying potassium current (IKr) in heart. May associate with KCNQ2 and/or KCNQ3 alpha subunits to modulate the native M-type current. May associate with HCN1 and HCN2 channel subunits to increase potassium current. Forms a heterooligomer complex with KCNQ1/KVLQT1 alpha subunits which leads to currents with an apparently instantaneous activation, a rapid deactivation process and a linear current-voltage relationship and decreases the amplitude of the outward current. KCNQ1-KCNE2 channel associates with Na(+)-coupled myo-inositol symporter in the apical membrane of choroid plexus epithelium and regulates the myo-inositol gradient between blood and cerebrospinal fluid with an impact on neuron excitability. The chain is Potassium voltage-gated channel subfamily E member 2 from Homo sapiens (Human).